We begin with the raw amino-acid sequence, 896 residues long: MDIENTNKPDVILNKKSSKAADSKPESGKTDSKRKVVVKVSKTSAGKSKKPESSSEESSGGKASGKQVISVKKASSQSSKPAEASVKEKKPDERLEETKKTAPRFEDKKSDAPSAQNEKRSFDSAKKEEKQTERKKPTPSSIDSIDFASKRPNVKAGNLADSGRRNNRGQGNRPQRPGGQGQGQPGQGRRRESNFSGAQARAYSDGKKQGFRTGQGGQQGRPGDRPQNRPGFGGPRPGAAPAPIPVEKNKAQTNKKAHKAKKEIYNKKNKEEEFFEERLLNQKKKQKEKIHNIPKQIEIMESISVSELAKKMNLKASELIGKLMGMGMMVTMNQSIDADTATILASEYDCDVKIVSLYDETVIESKEDDLSELQPRPPVVTIMGHVDHGKTKTLDAIRSSNVIAGEFGGITQHIGAYTVNTHGGKITFLDTPGHEAFTMMRARGAEITDIVVLVVAADDGVMPQTIEAINHARDAKVPIIVAVNKVDKPEANVDKVKTRLSELGLMPEEWGGDTMFVEISALKKLGLDNLLDTILLQAEVLELKANYTCNAEGKVIESRIDHGRGVVATIIVQRGTLRTGDPYVAGIYSGRVRAIFNDRGEKIDEATPSMPVEILGLEGMPNAGDPFQVTDSERIARQISDKRQELKRFEDSRNVKKVTLDNLYETIHDGEILELKVIIKGDVQGSVEALKQSLEKLSTPEIRLNVIHASAGAINDSDVMLAAADSNALIIGFNVRPTPQAKLLADQEKVDIRKYTVIYKAVEEIQLAMEGMLSPDIKEQVIGMVEVRNTFKVPKIGKIAGCYVLEGVVKRNCAVHVIRDGIVVHSGKLSSLKRFKDDAKEVAAGFECGIGIEDFNDIQVDDQLEIIEMIQVARKLSDSEKYKAPEIKEEGTETDE.

Residues 1 to 260 (MDIENTNKPD…AQTNKKAHKA (260 aa)) form a disordered region. Over residues 19-34 (KAADSKPESGKTDSKR) the composition is skewed to basic and acidic residues. Over residues 56 to 66 (EESSGGKASGK) the composition is skewed to low complexity. A compositionally biased stretch (basic and acidic residues) spans 85 to 136 (SVKEKKPDERLEETKKTAPRFEDKKSDAPSAQNEKRSFDSAKKEEKQTERKK). Positions 168 to 177 (RGQGNRPQRP) are enriched in low complexity. Residues 375-544 (PRPPVVTIMG…LLQAEVLELK (170 aa)) enclose the tr-type G domain. Residues 384 to 391 (GHVDHGKT) are G1. 384 to 391 (GHVDHGKT) contributes to the GTP binding site. A G2 region spans residues 409-413 (GITQH). The interval 430–433 (DTPG) is G3. GTP contacts are provided by residues 430–434 (DTPGH) and 484–487 (NKVD). A G4 region spans residues 484–487 (NKVD). Residues 520–522 (SAL) are G5. Positions 877 to 896 (SDSEKYKAPEIKEEGTETDE) are disordered.

It belongs to the TRAFAC class translation factor GTPase superfamily. Classic translation factor GTPase family. IF-2 subfamily.

The protein resides in the cytoplasm. Functionally, one of the essential components for the initiation of protein synthesis. Protects formylmethionyl-tRNA from spontaneous hydrolysis and promotes its binding to the 30S ribosomal subunits. Also involved in the hydrolysis of GTP during the formation of the 70S ribosomal complex. In Treponema denticola (strain ATCC 35405 / DSM 14222 / CIP 103919 / JCM 8153 / KCTC 15104), this protein is Translation initiation factor IF-2.